We begin with the raw amino-acid sequence, 714 residues long: Fatty acid oxidation complex subunit alpha (714 aa).

The enoyl-CoA hydratase stretch occupies residues 1–190; sequence MEMTSAFTLN…KLGLVDDVVP (190 aa). The 3-hydroxyacyl-CoA dehydrogenase stretch occupies residues 306–714; that stretch reads APLNSVGILG…FWKTTATDLQ (409 aa).

In the N-terminal section; belongs to the enoyl-CoA hydratase/isomerase family. The protein in the central section; belongs to the 3-hydroxyacyl-CoA dehydrogenase family. In terms of assembly, heterotetramer of two alpha chains (FadJ) and two beta chains (FadI).

It is found in the cytoplasm. The catalysed reaction is a (3S)-3-hydroxyacyl-CoA = a (2E)-enoyl-CoA + H2O. It carries out the reaction a 4-saturated-(3S)-3-hydroxyacyl-CoA = a (3E)-enoyl-CoA + H2O. The enzyme catalyses a (3S)-3-hydroxyacyl-CoA + NAD(+) = a 3-oxoacyl-CoA + NADH + H(+). It catalyses the reaction (3S)-3-hydroxybutanoyl-CoA = (3R)-3-hydroxybutanoyl-CoA. The protein operates within lipid metabolism; fatty acid beta-oxidation. In terms of biological role, catalyzes the formation of a hydroxyacyl-CoA by addition of water on enoyl-CoA. Also exhibits 3-hydroxyacyl-CoA epimerase and 3-hydroxyacyl-CoA dehydrogenase activities. Strongly involved in the anaerobic degradation of long and medium-chain fatty acids in the presence of nitrate and weakly involved in the aerobic degradation of long-chain fatty acids. This chain is Fatty acid oxidation complex subunit alpha (fadJ), found in Escherichia coli (strain K12).